Reading from the N-terminus, the 110-residue chain is Cytochrome c oxidase subunit 4B (110 aa).

3 helical membrane passes run Met29–Glu49, Phe55–Phe75, and Phe89–Trp109.

Belongs to the cytochrome c oxidase bacterial subunit 4 family.

Its subcellular location is the cell membrane. The catalysed reaction is 4 Fe(II)-[cytochrome c] + O2 + 8 H(+)(in) = 4 Fe(III)-[cytochrome c] + 2 H2O + 4 H(+)(out). This chain is Cytochrome c oxidase subunit 4B (caaD), found in Bacillus sp. (strain PS3).